The following is a 285-amino-acid chain: MLCNFNLQAKVVLQPLVLFQIIDSYERRPKDATQIIGTLLGRSNGKEITITNCFTVLHKEHPDSARIDLDLGYANDMLELNQLTYPQEKVLGWFSTGKSVSRSALLLHDYYSRECSDGQPLHLLVDATLKGQRLSTRLYCGVEMGVPGGTKGLMFSLVPLEMASDSAEMVALRLMQKQNLQPGAKQVGRILPELVQVVEATRELQLRLDLVLRYINDVLARKRRPDNVVGRALHDTLTSVPLVDTDNFKLMFNANVRDMLMAITLSTMIKTQLQISEKLFAMPDH.

Positions 11 to 145 constitute an MPN domain; that stretch reads VVLQPLVLFQ…TRLYCGVEMG (135 aa).

The protein belongs to the eIF-3 subunit F family. In terms of assembly, component of the eukaryotic translation initiation factor 3 (eIF-3) complex. The eIF-3 complex interacts with pix.

It is found in the cytoplasm. Component of the eukaryotic translation initiation factor 3 (eIF-3) complex, which is involved in protein synthesis of a specialized repertoire of mRNAs and, together with other initiation factors, stimulates binding of mRNA and methionyl-tRNAi to the 40S ribosome. The eIF-3 complex specifically targets and initiates translation of a subset of mRNAs involved in cell proliferation. The protein is Eukaryotic translation initiation factor 3 subunit F-2 of Drosophila ananassae (Fruit fly).